The sequence spans 309 residues: Aromatic prenyltransferase (309 aa).

The protein belongs to the aromatic prenyltransferase family.

Its function is as follows. Prenyltransferase that attaches isoprenoid moieties to carbon atoms of aromatic substrates in an enzyme-catalyzed Friedel-Crafts reaction. Shows specificity for dimethylallyl diphosphate (DMAPP) and does not accept geranyl diphosphate (GPP) or isopentenyl diphosphate (IPP). Prenylates the artificial substrate 2,7-dihydroxynaphthalene (2,7-DHN), as well as dihydrophenazine-1-carboxylic acid and 4-hydroxybenzoic acid at lower levels. Only traces of products are detected with aspulvinone E or flaviolin as substrates; and no product is formed with L-tryptophan, L-tyrosine, or 4-hydroxyphenylpyruvate. Ptf seems no to be involved in the prenylation reaction in the biosynthesis of aspulvinone H and J and the physiological function of ptf remains unknown. This Botryotinia fuckeliana (strain B05.10) (Noble rot fungus) protein is Aromatic prenyltransferase.